The chain runs to 262 residues: Dimeric xanthone biosynthesis cluster protein R11 (262 aa).

The hemerythrin-like stretch occupies residues 69–160 (IADLLFYTKT…PQLFKHLNDE (92 aa)).

It participates in secondary metabolite biosynthesis. In terms of biological role, part of the gene cluster that mediates the biosynthesis of the dimeric xanthones cryptosporioptides. The pathway begins with the synthesis of atrochrysone thioester by the polyketide synthase dmx-nrPKS. The atrochrysone carboxyl ACP thioesterase dmxR1 then breaks the thioester bond and releases the atrochrysone carboxylic acid from dmx-nrPKS. Atrochrysone carboxylic acid is decarboxylated by the decarboxylase dmxR15, and oxidized by the anthrone oxygenase dmxR16 to yield emodin. Emodin is then reduced to emodin hydroquinone by the oxidoreductase dmxR7. A-ring reduction by the short chain dehydrogenase dmxR18, dehydration by the scytalone dehydratase-like protein dmxR17 and probable spontaneous re-oxidation, results in overall deoxygenation to chrysophanol. Baeyer-Villiger oxidation by the Baeyer-Villiger monooxygenase (BVMO) dmxR6 then yields monodictylactone in equilibrium with monodictyphenone. In the case of the cryptosporioptides biosynthesis, monodictylactone is reduced at C-12 to an alcohol (by the short chain dehydrogenases dmxR12 or dmxR8) and hydroxylated at C-5 by dmxR9, yielding the electron-rich aromatic which could eliminate H(2)O to form the ortho-quinonemethide, followed by tautomerisation to paraquinone and complete the formal reduction to produce the 10-methylgroup. Conjugate addition of C-4a-OH to the resulting paraquinone by the monooxygenase dmxR10 then gives cyclohexadienone, which is then reduced at C-5 by the short chain dehydrogenase dmxR3 to give the dihydroxanthone. The 6,7-epoxide in the cryptosporioptides could be introduced by the cytochrome P450 monooxygenase dmxL3. The highly reducing PKS dmxL2 manufactures butyrate, which is further carboxylated by dmxL1 to form ethylmalonate. It is not yet clear whether the carboxylation occurs while the butyrate is attached to the ACP of dmxL2, but this unusual fungal metabolite could then be esterified to O-5 by the O-acetyltransferase dmxR13. Finally, dimerization performed by dmxR5 gives the observed dimers cryptosporioptides A, B and C as the final products of the pathway. The chain is Dimeric xanthone biosynthesis cluster protein R11 from Cryptosporiopsis sp. (strain 8999).